A 333-amino-acid chain; its full sequence is Protein SEEDLING LETHAL 1, chloroplastic (333 aa).

The N-terminal 55 residues, Met-1 to Ser-55, are a transit peptide targeting the chloroplast. Residues Pro-38–Glu-67 are disordered.

The protein belongs to the mTERF family. As to quaternary structure, self-interacts. Associates with the plastid-encoded RNA polymerase (PEP) complex. Interacts directly with PTAC7/PAP12, PTAC12/HMR/PAP5 and PTAC14/PAP7. In terms of tissue distribution, expressed in green aerial tissues such as cotyledons, leaves, flowers and siliques, but not in roots.

It is found in the plastid. The protein resides in the chloroplast stroma. It localises to the chloroplast nucleoid. Functionally, transcription termination factor required for chloroplast gene expression and protein synthesis in chloroplasts. Necessary for chloroplast photosynthetic complexes assembly by modulating the accumulation of photosynthetic proteins. Essential for embryogenesis. The chain is Protein SEEDLING LETHAL 1, chloroplastic from Arabidopsis thaliana (Mouse-ear cress).